Here is a 123-residue protein sequence, read N- to C-terminus: Small ribosomal subunit protein uS12 (123 aa).

The segment at 1–28 (MPTIQQLIRKPRQPKVKRSKSMHLEQCP) is disordered. Over residues 9-21 (RKPRQPKVKRSKS) the composition is skewed to basic residues. At Asp89 the chain carries 3-methylthioaspartic acid.

The protein belongs to the universal ribosomal protein uS12 family. As to quaternary structure, part of the 30S ribosomal subunit. Contacts proteins S8 and S17. May interact with IF1 in the 30S initiation complex.

Functionally, with S4 and S5 plays an important role in translational accuracy. Interacts with and stabilizes bases of the 16S rRNA that are involved in tRNA selection in the A site and with the mRNA backbone. Located at the interface of the 30S and 50S subunits, it traverses the body of the 30S subunit contacting proteins on the other side and probably holding the rRNA structure together. The combined cluster of proteins S8, S12 and S17 appears to hold together the shoulder and platform of the 30S subunit. The protein is Small ribosomal subunit protein uS12 of Ruegeria sp. (strain TM1040) (Silicibacter sp.).